Here is a 64-residue protein sequence, read N- to C-terminus: Large ribosomal subunit protein uL30 (64 aa).

Positions 1–22 (MAKAAKTIKVEQTRSAIRRQHS) are disordered.

Belongs to the universal ribosomal protein uL30 family. In terms of assembly, part of the 50S ribosomal subunit.

This chain is Large ribosomal subunit protein uL30, found in Nitrobacter hamburgensis (strain DSM 10229 / NCIMB 13809 / X14).